Here is a 202-residue protein sequence, read N- to C-terminus: Interleukin-17D (202 aa).

Residues 1–15 (MLVAGFLLALPPSWA) form the signal peptide. The interval 65–85 (QARNASCPAGGRPADRRFRPP) is disordered. Residues Asn68 and Asn181 are each glycosylated (N-linked (GlcNAc...) asparagine).

Belongs to the IL-17 family. As to expression, expressed preferentially in adipose, skeletal muscle and CNS.

The protein resides in the secreted. Its function is as follows. Induces expression of IL6, CXCL8/IL8, and CSF2/GM-CSF from endothelial cells. In Homo sapiens (Human), this protein is Interleukin-17D (IL17D).